The primary structure comprises 546 residues: Chaperonin GroEL (546 aa).

ATP is bound by residues 30–33 (TLGP), K51, 87–91 (DGTTT), G415, 479–481 (NAA), and D495.

The protein belongs to the chaperonin (HSP60) family. Forms a cylinder of 14 subunits composed of two heptameric rings stacked back-to-back. Interacts with the co-chaperonin GroES.

Its subcellular location is the cytoplasm. The enzyme catalyses ATP + H2O + a folded polypeptide = ADP + phosphate + an unfolded polypeptide.. In terms of biological role, together with its co-chaperonin GroES, plays an essential role in assisting protein folding. The GroEL-GroES system forms a nano-cage that allows encapsulation of the non-native substrate proteins and provides a physical environment optimized to promote and accelerate protein folding. This is Chaperonin GroEL from Pseudomonas putida (strain ATCC 47054 / DSM 6125 / CFBP 8728 / NCIMB 11950 / KT2440).